Here is a 224-residue protein sequence, read N- to C-terminus: Urease accessory protein UreF (224 aa).

It belongs to the UreF family. UreD, UreF and UreG form a complex that acts as a GTP-hydrolysis-dependent molecular chaperone, activating the urease apoprotein by helping to assemble the nickel containing metallocenter of UreC. The UreE protein probably delivers the nickel.

The protein resides in the cytoplasm. Required for maturation of urease via the functional incorporation of the urease nickel metallocenter. This is Urease accessory protein UreF from Pseudomonas entomophila (strain L48).